Here is a 559-residue protein sequence, read N- to C-terminus: DDB1- and CUL4-associated factor 10 (559 aa).

A disordered region spans residues 1 to 119 (MFPFGPHSPG…HGLGAGLGGP (119 aa)). A phosphoserine mark is found at serine 53, serine 63, serine 89, and serine 92. Residues 56–86 (RPGAPSLSPAPRSGELGLPGAPESSTASAPG) show a composition bias toward low complexity. Pro residues predominate over residues 87–97 (EPSPPSPPCRR). Arginine 134 bears the Omega-N-methylarginine mark. WD repeat units lie at residues 166 to 205 (RTHG…HIKT), 209 to 247 (AHED…TKVC), 251 to 290 (GHTS…EDGC), and 296 to 335 (FHTR…KSLE). Serine 349 is subject to Phosphoserine. Over residues 350 to 367 (SSDLTTSSSSSGPRVSGS) the composition is skewed to low complexity. A disordered region spans residues 350 to 396 (SSDLTTSSSSSGPRVSGSPCHHSDSNSSEKHMSRASQREGVSPRNSL). Residues 370-381 (HHSDSNSSEKHM) are compositionally biased toward basic and acidic residues. WD repeat units follow at residues 408-448 (DHGN…QEGA), 470-508 (VGRG…SELV), and 526-559 (SHND…QPKF).

This sequence belongs to the WD repeat DCAF10 family. Interacts with DDB1.

It functions in the pathway protein modification; protein ubiquitination. May function as a substrate receptor for CUL4-DDB1 E3 ubiquitin-protein ligase complex. The sequence is that of DDB1- and CUL4-associated factor 10 (DCAF10) from Homo sapiens (Human).